We begin with the raw amino-acid sequence, 187 residues long: UPF0301 protein Noc_0368 (187 aa).

This sequence belongs to the UPF0301 (AlgH) family.

The polypeptide is UPF0301 protein Noc_0368 (Nitrosococcus oceani (strain ATCC 19707 / BCRC 17464 / JCM 30415 / NCIMB 11848 / C-107)).